A 269-amino-acid chain; its full sequence is Ribosomal RNA small subunit methyltransferase A (269 aa).

Positions 17, 42, 64, 89, and 109 each coordinate S-adenosyl-L-methionine.

Belongs to the class I-like SAM-binding methyltransferase superfamily. rRNA adenine N(6)-methyltransferase family. RsmA subfamily.

It localises to the cytoplasm. It catalyses the reaction adenosine(1518)/adenosine(1519) in 16S rRNA + 4 S-adenosyl-L-methionine = N(6)-dimethyladenosine(1518)/N(6)-dimethyladenosine(1519) in 16S rRNA + 4 S-adenosyl-L-homocysteine + 4 H(+). Specifically dimethylates two adjacent adenosines (A1518 and A1519) in the loop of a conserved hairpin near the 3'-end of 16S rRNA in the 30S particle. May play a critical role in biogenesis of 30S subunits. The protein is Ribosomal RNA small subunit methyltransferase A of Anaplasma phagocytophilum (strain HZ).